A 433-amino-acid polypeptide reads, in one-letter code: Divergent protein kinase domain 2B (433 aa).

Residues 1–29 form the signal peptide; sequence MEPRLGPKAAALHLGWPFLLLWVSGLSYS. N-linked (GlcNAc...) asparagine glycosylation occurs at N100.

The protein belongs to the DIPK family.

Its subcellular location is the secreted. This is Divergent protein kinase domain 2B (DIPK2B) from Bos taurus (Bovine).